A 715-amino-acid chain; its full sequence is Protein sneaky (715 aa).

The Cytoplasmic segment spans residues 1 to 32 (MLSLLTRPFLPIFCFLYGPQSEGSTRIQCLRR). Residues 33-53 (FVTFLLGLVLGFLLWKLAALN) traverse the membrane as a helical segment. At 54 to 66 (FTLGRLFVNGATD) the chain is on the extracellular side. A helical transmembrane segment spans residues 67 to 87 (LYVFIIFVLVTGTIFMLSLPV). Residues 88–109 (RAVILLIFVALVGKSGRTYLRA) lie on the Cytoplasmic side of the membrane. A helical membrane pass occupies residues 110–130 (VAFAFIISGPIANLVENAGEV). The Extracellular portion of the chain corresponds to 131-373 (ARVFVCTTVL…FERQKRIFNK (243 aa)). The helical transmembrane segment at 374-394 (VMGILQKILCLFMLRMVYVSI) threads the bilayer. The Cytoplasmic segment spans residues 395–457 (NYYVKYLNDV…FSRTHHESTT (63 aa)). The chain crosses the membrane as a helical span at residues 458–478 (VCFNLLQFLLELVTAGLFILI). At 479–553 (DHLVVELLQI…NAHVLPKKMY (75 aa)) the chain is on the extracellular side. Residues 554 to 574 (YQLILLYLIIIVLIYQSTTFL) form a helical membrane-spanning segment. Residues 575-715 (RMRRVICSFF…VEVYTYRKEK (141 aa)) lie on the Cytoplasmic side of the membrane. An RING-type; degenerate zinc finger spans residues 655–691 (CMICRGLEDSTFTVCGNCGLPYCDDCAEDLNSVCFQC).

In terms of tissue distribution, specifically expressed in testis.

It localises to the cytoplasmic vesicle. The protein resides in the secretory vesicle. The protein localises to the acrosome membrane. Its subcellular location is the cytoplasm. It is found in the cytoplasmic vesicle membrane. Component of the sperm acrosome membrane. Required for breakdown of the sperm plasma membrane after sperm entry into the egg, which is an essential prerequisite for successful fertilization. The sequence is that of Protein sneaky from Drosophila melanogaster (Fruit fly).